The chain runs to 860 residues: Tetratricopeptide repeat protein 13 (860 aa).

TPR repeat units follow at residues Thr143 to Leu176, Pro216 to Ser248, Ala249 to Gln282, Ile284 to Phe316, Ile317 to His350, Gln352 to Asn384, and Val386 to Pro418.

The polypeptide is Tetratricopeptide repeat protein 13 (TTC13) (Homo sapiens (Human)).